We begin with the raw amino-acid sequence, 445 residues long: MREIVHLQAGQCGNQIGAKFWEVISDEHGIDPTGTYHGDSDLQLDRINVYYNEASGGKYVPRAVLVDLEPGTMDSVRSGAFGQVFRPDNFVFGQSGAGNNWAKGHYTEGAELVDSVLDVVRKEAESCDCLQGFQLTHSLGGGTGSGMGTLLISKIREEYPDRIMNTFSVVPSPKVSDTVVEPYNATLSVHQLVENTDETYCIDNEALYDICFRTLKLTTPSYGDLNHLVSATMSGVTTCLRFPGQLNADLRKLAVNMVPFPRLHFFMPGFAPLTSRGSQQYRSLTVPELTQQMFDGKNMMAACDPRHGRYLTVAAIFRGRMSMKEVDEQMLNVQNKNSSYFVEWIPNNVKTAVCDIPPRGLKMAATFIGNSTAIQELFKRISEQFTAMFRRKAFLHWYTGEGMDEMEFTEAESNMNDLVSEYQQYQDATAEEEGEFEEEGEEELA.

Residues 1-4 carry the MREI motif motif; it reads MREI. 8 residues coordinate GTP: Gln-11, Glu-69, Ser-138, Gly-142, Thr-143, Gly-144, Asn-204, and Asn-226. A Mg(2+)-binding site is contributed by Glu-69. Positions 425-445 are disordered; sequence YQDATAEEEGEFEEEGEEELA. The span at 429-445 shows a compositional bias: acidic residues; sequence TAEEEGEFEEEGEEELA. Residue Glu-438 is modified to 5-glutamyl polyglutamate.

Belongs to the tubulin family. As to quaternary structure, dimer of alpha and beta chains. A typical microtubule is a hollow water-filled tube with an outer diameter of 25 nm and an inner diameter of 15 nM. Alpha-beta heterodimers associate head-to-tail to form protofilaments running lengthwise along the microtubule wall with the beta-tubulin subunit facing the microtubule plus end conferring a structural polarity. Microtubules usually have 13 protofilaments but different protofilament numbers can be found in some organisms and specialized cells. Requires Mg(2+) as cofactor. Post-translationally, some glutamate residues at the C-terminus are polyglycylated, resulting in polyglycine chains on the gamma-carboxyl group. Glycylation is mainly limited to tubulin incorporated into axonemes (cilia and flagella) whereas glutamylation is prevalent in neuronal cells, centrioles, axonemes, and the mitotic spindle. Both modifications can coexist on the same protein on adjacent residues, and lowering polyglycylation levels increases polyglutamylation, and reciprocally. The precise function of polyglycylation is still unclear. In terms of processing, some glutamate residues at the C-terminus are polyglutamylated, resulting in polyglutamate chains on the gamma-carboxyl group. Polyglutamylation plays a key role in microtubule severing by spastin (SPAST). SPAST preferentially recognizes and acts on microtubules decorated with short polyglutamate tails: severing activity by SPAST increases as the number of glutamates per tubulin rises from one to eight, but decreases beyond this glutamylation threshold.

It is found in the cytoplasm. The protein resides in the cytoskeleton. Functionally, tubulin is the major constituent of microtubules, a cylinder consisting of laterally associated linear protofilaments composed of alpha- and beta-tubulin heterodimers. Microtubules grow by the addition of GTP-tubulin dimers to the microtubule end, where a stabilizing cap forms. Below the cap, tubulin dimers are in GDP-bound state, owing to GTPase activity of alpha-tubulin. This chain is Tubulin beta-1 chain, found in Gadus morhua (Atlantic cod).